An 87-amino-acid chain; its full sequence is Cytochrome c oxidase assembly factor 3, mitochondrial (87 aa).

A helical membrane pass occupies residues 47-69 (NNLLTAGALGVSVLAIYGYSIFS).

This sequence belongs to the COA3 family.

Its subcellular location is the mitochondrion membrane. Its function is as follows. Plays a critical role in the biogenesis and activity of cytochrome c oxidase (COX) (complex IV). In Drosophila melanogaster (Fruit fly), this protein is Cytochrome c oxidase assembly factor 3, mitochondrial (Ccdc56).